The chain runs to 103 residues: Pyrimidine/purine nucleoside phosphorylase (103 aa).

This sequence belongs to the nucleoside phosphorylase PpnP family.

The enzyme catalyses a purine D-ribonucleoside + phosphate = a purine nucleobase + alpha-D-ribose 1-phosphate. It carries out the reaction adenosine + phosphate = alpha-D-ribose 1-phosphate + adenine. The catalysed reaction is cytidine + phosphate = cytosine + alpha-D-ribose 1-phosphate. It catalyses the reaction guanosine + phosphate = alpha-D-ribose 1-phosphate + guanine. The enzyme catalyses inosine + phosphate = alpha-D-ribose 1-phosphate + hypoxanthine. It carries out the reaction thymidine + phosphate = 2-deoxy-alpha-D-ribose 1-phosphate + thymine. The catalysed reaction is uridine + phosphate = alpha-D-ribose 1-phosphate + uracil. It catalyses the reaction xanthosine + phosphate = alpha-D-ribose 1-phosphate + xanthine. In terms of biological role, catalyzes the phosphorolysis of diverse nucleosides, yielding D-ribose 1-phosphate and the respective free bases. Can use uridine, adenosine, guanosine, cytidine, thymidine, inosine and xanthosine as substrates. Also catalyzes the reverse reactions. This chain is Pyrimidine/purine nucleoside phosphorylase, found in Cupriavidus metallidurans (strain ATCC 43123 / DSM 2839 / NBRC 102507 / CH34) (Ralstonia metallidurans).